Consider the following 118-residue polypeptide: Small ribosomal subunit protein uS13 (118 aa).

Residues 94 to 118 (SLPVRGQRTKTNARTRKGPRKPIKK) form a disordered region.

The protein belongs to the universal ribosomal protein uS13 family. As to quaternary structure, part of the 30S ribosomal subunit. Forms a loose heterodimer with protein S19. Forms two bridges to the 50S subunit in the 70S ribosome.

Functionally, located at the top of the head of the 30S subunit, it contacts several helices of the 16S rRNA. In the 70S ribosome it contacts the 23S rRNA (bridge B1a) and protein L5 of the 50S subunit (bridge B1b), connecting the 2 subunits; these bridges are implicated in subunit movement. Contacts the tRNAs in the A and P-sites. The polypeptide is Small ribosomal subunit protein uS13 (Actinobacillus pleuropneumoniae serotype 5b (strain L20)).